The primary structure comprises 286 residues: Tyrosine recombinase XerA (286 aa).

Residues 5 to 82 (TLRSEVLEEF…ALKAYFKFEG (78 aa)) enclose the Core-binding (CB) domain. In terms of domain architecture, Tyr recombinase spans 98–274 (TLPKSLTEEE…TAKHLKEAVE (177 aa)). Residues Arg135, Lys160, His226, Arg229, and His252 contribute to the active site. The active-site O-(3'-phospho-DNA)-tyrosine intermediate is the Tyr261.

Belongs to the 'phage' integrase family. XerA subfamily.

Its subcellular location is the cytoplasm. Its function is as follows. Site-specific tyrosine recombinase, which acts by catalyzing the cutting and rejoining of the recombining DNA molecules. The polypeptide is Tyrosine recombinase XerA (Pyrococcus furiosus (strain ATCC 43587 / DSM 3638 / JCM 8422 / Vc1)).